A 466-amino-acid chain; its full sequence is Replicative helicase loading/DNA remodeling protein DnaB (466 aa).

A DDBH1 region spans residues 3–113 (RQAFEFGLRP…ETQFVYQLIQ (111 aa)). The DDBH2-1 stretch occupies residues 200-292 (EMLRQMLGKH…TSSSAGKSSE (93 aa)). A DDBH2-2 region spans residues 293–401 (VNPKPQSDEW…QPKNEGSSGN (109 aa)).

Belongs to the DnaB/DnaD family. As to quaternary structure, homotetramer, higher-order oligomers are induced by ssDNA. The DNA replisome assembles sequentially on oriC in this order; DnaA, DnaD, DnaB, DnaI-DnaC helicase. Part of the replication restart primosome, PriA binds first, then DnaD and subsequently DnaB bind.

In terms of biological role, helps DnaI load the DnaC replicative helicase onto single-stranded (ss)DNA. During DNA replication from the origin of replication (oriC) in the DNA replisome, DnaB and DnaD are required after DnaA and before subsequent helicase DnaC loading. Component of the replication restart primosome, which reloads the replicative helicase on sites other than oriC. Essential for replication initiation of the chromosome and plasmids. Remodels DNA, laterally compacts supercoiled plasmid and linear DNA. Binds supercoiled, nicked and linear double-stranded (ds)DNA and phage phiX174 single-stranded (ss)DNA; phiX174 ssDNA is a better substrate than for B.subtilis. No binding to phage M13 ssDNA although it induces oligomers. The sequence is that of Replicative helicase loading/DNA remodeling protein DnaB from Staphylococcus aureus (strain NCTC 8325 / PS 47).